A 221-amino-acid chain; its full sequence is Deoxyribose-phosphate aldolase (221 aa).

Asp-91 functions as the Proton donor/acceptor in the catalytic mechanism. Lys-153 serves as the catalytic Schiff-base intermediate with acetaldehyde. The active-site Proton donor/acceptor is Lys-182.

Belongs to the DeoC/FbaB aldolase family. DeoC type 1 subfamily.

The protein localises to the cytoplasm. It catalyses the reaction 2-deoxy-D-ribose 5-phosphate = D-glyceraldehyde 3-phosphate + acetaldehyde. It participates in carbohydrate degradation; 2-deoxy-D-ribose 1-phosphate degradation; D-glyceraldehyde 3-phosphate and acetaldehyde from 2-deoxy-alpha-D-ribose 1-phosphate: step 2/2. In terms of biological role, catalyzes a reversible aldol reaction between acetaldehyde and D-glyceraldehyde 3-phosphate to generate 2-deoxy-D-ribose 5-phosphate. The chain is Deoxyribose-phosphate aldolase from Clostridium botulinum (strain Eklund 17B / Type B).